Consider the following 481-residue polypeptide: Pyruvate kinase (481 aa).

Arg-33 is a substrate binding site. Positions 35, 37, 67, and 68 each coordinate K(+). 35–38 (NFSH) provides a ligand contact to ATP. Residues Arg-74 and Lys-155 each coordinate ATP. Glu-221 provides a ligand contact to Mg(2+). 3 residues coordinate substrate: Gly-244, Asp-245, and Thr-277. Residue Asp-245 participates in Mg(2+) binding.

It belongs to the pyruvate kinase family. In terms of assembly, homotetramer. The cofactor is Mg(2+). It depends on K(+) as a cofactor.

The enzyme catalyses pyruvate + ATP = phosphoenolpyruvate + ADP + H(+). The protein operates within carbohydrate degradation; glycolysis; pyruvate from D-glyceraldehyde 3-phosphate: step 5/5. This is Pyruvate kinase (pyk) from Chlamydia muridarum (strain MoPn / Nigg).